The chain runs to 450 residues: tRNA modification GTPase MnmE (450 aa).

(6S)-5-formyl-5,6,7,8-tetrahydrofolate is bound by residues arginine 23, glutamate 79, and lysine 118. A TrmE-type G domain is found at 214–374 (GITLILVGKP…LKEHILNKVG (161 aa)). Asparagine 224 contributes to the K(+) binding site. GTP-binding positions include 224–229 (NAGKSS), 243–249 (TSIAGTT), and 268–271 (DTAG). Mg(2+) is bound at residue serine 228. Residues threonine 243, isoleucine 245, and threonine 248 each contribute to the K(+) site. Threonine 249 contributes to the Mg(2+) binding site. Residue lysine 450 participates in (6S)-5-formyl-5,6,7,8-tetrahydrofolate binding.

This sequence belongs to the TRAFAC class TrmE-Era-EngA-EngB-Septin-like GTPase superfamily. TrmE GTPase family. In terms of assembly, homodimer. Heterotetramer of two MnmE and two MnmG subunits. Requires K(+) as cofactor.

Its subcellular location is the cytoplasm. In terms of biological role, exhibits a very high intrinsic GTPase hydrolysis rate. Involved in the addition of a carboxymethylaminomethyl (cmnm) group at the wobble position (U34) of certain tRNAs, forming tRNA-cmnm(5)s(2)U34. This is tRNA modification GTPase MnmE from Francisella tularensis subsp. holarctica (strain FTNF002-00 / FTA).